The sequence spans 205 residues: Probable GTP-binding protein EngB (205 aa).

The 177-residue stretch at 22-198 folds into the EngB-type G domain; sequence HLPEYAFIGR…LSYIDEVNQD (177 aa). Residues 30 to 37, 57 to 61, 75 to 78, 142 to 145, and 177 to 179 each bind GTP; these read GRSNVGKS, GKTQL, DLPG, TKAD, and TSA. Mg(2+) is bound by residues Ser-37 and Thr-59.

Belongs to the TRAFAC class TrmE-Era-EngA-EngB-Septin-like GTPase superfamily. EngB GTPase family. Requires Mg(2+) as cofactor.

Functionally, necessary for normal cell division and for the maintenance of normal septation. This is Probable GTP-binding protein EngB from Flavobacterium psychrophilum (strain ATCC 49511 / DSM 21280 / CIP 103535 / JIP02/86).